The following is a 490-amino-acid chain: ATP synthase subunit beta, chloroplastic (490 aa).

An ATP-binding site is contributed by 170-177 (GGAGVGKT).

This sequence belongs to the ATPase alpha/beta chains family. F-type ATPases have 2 components, CF(1) - the catalytic core - and CF(0) - the membrane proton channel. CF(1) has five subunits: alpha(3), beta(3), gamma(1), delta(1), epsilon(1). CF(0) has four main subunits: a(1), b(1), b'(1) and c(9-12).

Its subcellular location is the plastid. The protein localises to the chloroplast thylakoid membrane. The enzyme catalyses ATP + H2O + 4 H(+)(in) = ADP + phosphate + 5 H(+)(out). Its function is as follows. Produces ATP from ADP in the presence of a proton gradient across the membrane. The catalytic sites are hosted primarily by the beta subunits. The sequence is that of ATP synthase subunit beta, chloroplastic from Ipomoea quamoclit (Cypress vine).